A 528-amino-acid chain; its full sequence is Linear primary-alkylsulfatase (528 aa).

Histidine 42, histidine 44, aspartate 46, histidine 47, glutamate 151, and glutamate 170 together coordinate Zn(2+). Sulfate-binding positions include 179-184 and arginine 189; that span reads NVHTLR. Histidine 213 contacts Zn(2+). A sulfate-binding site is contributed by tyrosine 275.

Belongs to the metallo-beta-lactamase superfamily. Type III sulfatase family. Zn(2+) serves as cofactor.

It carries out the reaction a primary linear alkyl sulfate ester + H2O = a primary alcohol + sulfate + H(+). In terms of biological role, alkylsulfatase that cleaves the widely used detergent sodium dodecyl sulfate (SDS), which allows the bacterium to use SDS as a sole carbon or sulfur source. This Pseudomonas sp. (strain ATCC 19151) protein is Linear primary-alkylsulfatase.